Here is a 457-residue protein sequence, read N- to C-terminus: Adenylosuccinate synthetase isozyme 2 B (457 aa).

GTP-binding positions include 40–46 and 68–70; these read GDEGKGK and GHT. The Proton acceptor role is filled by D41. Mg(2+)-binding residues include D41 and G68. D41 is a substrate binding site. Residues 41 to 44, 66 to 69, T163, R177, N256, T271, and R335 each bind IMP; these read DEGK and NAGH. The active-site Proton donor is H69. 331 to 337 is a binding site for substrate; the sequence is VTTGRKR. GTP contacts are provided by residues R337, 363–365, and 445–448; these read KLD and GVGK.

Belongs to the adenylosuccinate synthetase family. In terms of assembly, homodimer. The cofactor is Mg(2+).

The protein resides in the cytoplasm. It is found in the mitochondrion. The enzyme catalyses IMP + L-aspartate + GTP = N(6)-(1,2-dicarboxyethyl)-AMP + GDP + phosphate + 2 H(+). It participates in purine metabolism; AMP biosynthesis via de novo pathway; AMP from IMP: step 1/2. Inhibited competitively by AMP and IMP and non-competitively by fructose 1,6-bisphosphate. Plays an important role in the de novo pathway and in the salvage pathway of purine nucleotide biosynthesis. Catalyzes the first committed step in the biosynthesis of AMP from IMP. The polypeptide is Adenylosuccinate synthetase isozyme 2 B (adss2-b) (Xenopus tropicalis (Western clawed frog)).